The chain runs to 427 residues: MTLAILAVFSVALTLLGFVLPPQGVKRATLLGLALALASLLLTWGKPFAFGPYAVDGVSQVFTLLALLGALWTVGLVRSGRFEFYLLVLYAALGMHLLASTRHLLLMLVALEALSLPLYALATWRRGQGLEAALKYFLLGALAAAFFLYGAALFYGATGSLVLGAPGEGPLYALALGLLLVGLGFKAALAPFHFWTPDVYQGSPTPVVLFMATSVKAAAFAALLRVAAPPEALALLVALSVVVGNLAALAQKEAKRLLAYSSIAHAGYMALALYTGNAQALGFYLLTYVLATGLAFAVLSQISPDRVPLEALRGLYRKDPLLGLAFLVAMLSLLGLPPLAGFWGKYLAFAEAARAGAWGVLVLALVTSAVSAYYYLGLGLAVFARPEETPFRPGPPWARAAVVAAGVLLLALGLLPGLVLPALAAGG.

14 helical membrane passes run 1–21, 30–50, 57–77, 79–99, 104–124, 137–157, 172–192, 204–224, 230–250, 257–277, 280–300, 322–342, 360–380, and 400–420; these read MTLA…FVLP, LLGL…PFAF, GVSQ…VGLV, SGRF…HLLA, LLLM…LATW, FLLG…FYGA, YALA…LAPF, PTPV…AALL, PEAL…AALA, LLAY…YTGN, ALGF…AVLS, LGLA…LAGF, VLVL…GLGL, and AAVV…GLVL.

Belongs to the complex I subunit 2 family. NDH-1 is composed of 15 different subunits, Nqo1 to Nqo15. The complex has a L-shaped structure, with the hydrophobic arm (subunits Nqo7, Nqo8 and Nqo10 to Nqo14) embedded in the membrane and the hydrophilic peripheral arm (subunits Nqo1 to Nqo6, Nqo9 and Nqo15) protruding into the bacterial cytoplasm. The hydrophilic domain contains all the redox centers.

It localises to the cell inner membrane. The catalysed reaction is a quinone + NADH + 5 H(+)(in) = a quinol + NAD(+) + 4 H(+)(out). Functionally, NDH-1 shuttles electrons from NADH, via FMN and iron-sulfur (Fe-S) centers, to quinones in the respiratory chain. The immediate electron acceptor for the enzyme in this species is menaquinone. Couples the redox reaction to proton translocation (for every two electrons transferred, four hydrogen ions are translocated across the cytoplasmic membrane), and thus conserves the redox energy in a proton gradient required for the synthesis of ATP. The polypeptide is NADH-quinone oxidoreductase subunit 14 (nqo14) (Thermus thermophilus (strain ATCC 27634 / DSM 579 / HB8)).